Reading from the N-terminus, the 1023-residue chain is Sodium/potassium-transporting ATPase subunit alpha-1 (1023 aa).

A propeptide spanning residues 1–5 is cleaved from the precursor; sequence MGKGV. Positions 1–11 are enriched in basic and acidic residues; it reads MGKGVGRDKYE. The interval 1–39 is disordered; it reads MGKGVGRDKYEPAAVSEQGDKKGKKGKKDRDMDELKKEV. At 6–87 the chain is on the cytoplasmic side; sequence GRDKYEPAAV…NALTPPPTTP (82 aa). Lysine 9 carries the N6-acetyllysine modification. Tyrosine 10 carries the post-translational modification Phosphotyrosine. Residue serine 16 is modified to Phosphoserine. Lysine 21 bears the N6-acetyllysine mark. Positions 28–39 are enriched in basic and acidic residues; that stretch reads KDRDMDELKKEV. Serine 40 and serine 47 each carry phosphoserine. The tract at residues 82 to 84 is phosphoinositide-3 kinase binding; sequence PPP. Residues 88–108 form a helical membrane-spanning segment; the sequence is EWIKFCRQLFGGFSMLLWIGA. Residues 109-131 lie on the Extracellular side of the membrane; it reads ILCFLAYSIQAATEEEPQNDNLY. Residues 132–152 form a helical membrane-spanning segment; that stretch reads LGVVLSAVVIITGCFSYYQEA. At 153 to 288 the chain is on the cytoplasmic side; sequence KSSKIMESFK…GGQTPIAAEI (136 aa). The interval 216–235 is disordered; that stretch reads SSLTGESEPQTRSPDFTNEN. Serine 228 carries the post-translational modification Phosphoserine. Tyrosine 260 carries the post-translational modification Phosphotyrosine. Residues 289–308 form a helical membrane-spanning segment; that stretch reads EHFIHIITGVAVFLGVSFFI. Over 309–320 the chain is Extracellular; sequence LSLILEYTWLEA. A helical membrane pass occupies residues 321-338; it reads VIFLIGIIVANVPEGLLA. At 339–772 the chain is on the cytoplasmic side; the sequence is TVTVCLTLTA…EEGRLIFDNL (434 aa). The active-site 4-aspartylphosphate intermediate is the aspartate 376. Phosphoserine is present on residues serine 452 and serine 484. Lysine 487 is a binding site for ATP. Position 542 is a phosphotyrosine (tyrosine 542). The mediates interaction with SCN7A stretch occupies residues 596–717; sequence RAAVPDAVGK…QGAIVAVTGD (122 aa). N6-succinyllysine is present on lysine 661. 2 positions are modified to phosphoserine: serine 668 and serine 675. Positions 717 and 721 each coordinate Mg(2+). Residues 773–792 form a helical membrane-spanning segment; the sequence is KKSIAYTLTSNIPEITPFLI. At 793–802 the chain is on the extracellular side; the sequence is FIIANIPLPL. Residues 803-823 form a helical membrane-spanning segment; it reads GTVTILCIDLGTDMVPAISLA. At 824–843 the chain is on the cytoplasmic side; that stretch reads YEQAESDIMKRQPRNPKTDK. Residues 844 to 866 form a helical membrane-spanning segment; the sequence is LVNERLISMAYGQIGMIQALGGF. Residues 867 to 918 lie on the Extracellular side of the membrane; it reads FTYFVILAENGFLPIHLLGLRVDWDDRWINDVEDSYGQQWTYEQRKIVEFTC. A helical membrane pass occupies residues 919 to 938; sequence HTAFFVSIVVVQWADLVICK. Over 939–951 the chain is Cytoplasmic; it reads TRRNSVFQQGMKN. At serine 943 the chain carries Phosphoserine; by PKA. The chain crosses the membrane as a helical span at residues 952 to 970; that stretch reads KILIFGLFEETALAAFLSY. Topologically, residues 971-985 are extracellular; it reads CPGMGVALRMYPLKP. The helical transmembrane segment at 986-1006 threads the bilayer; the sequence is TWWFCAFPYSLLIFVYDEVRK. Residues 1007–1023 lie on the Cytoplasmic side of the membrane; sequence LIIRRRPGGWVEKETYY.

The protein belongs to the cation transport ATPase (P-type) (TC 3.A.3) family. Type IIC subfamily. As to quaternary structure, the sodium/potassium-transporting ATPase is composed of a catalytic alpha subunit, an auxiliary non-catalytic beta subunit and an additional regulatory subunit. Interacts with regulatory subunit FXYD1. Interacts with regulatory subunit FXYD3. Interacts with SIK1. Binds the HLA class II histocompatibility antigen DR1. Interacts with SLC35G1 and STIM1. Interacts with CLN3; this interaction regulates the sodium/potassium-transporting ATPase complex localization at the plasma membrane. Interacts with SCN7A; activates ATP1A1 P-type sodium:potassium-exchanging transporter activity which indirectly signals to nearby neurons to regulate sodium homeostasis. In terms of processing, phosphorylation on Tyr-10 modulates pumping activity. Phosphorylation of Ser-943 by PKA modulates the response of ATP1A1 to PKC. Dephosphorylation by protein phosphatase 2A (PP2A) following increases in intracellular sodium, leading to increase catalytic activity.

It localises to the cell membrane. The protein resides in the basolateral cell membrane. The protein localises to the sarcolemma. Its subcellular location is the cell projection. It is found in the axon. It localises to the melanosome. The catalysed reaction is K(+)(out) + Na(+)(in) + ATP + H2O = K(+)(in) + Na(+)(out) + ADP + phosphate + H(+). Its function is as follows. This is the catalytic component of the active enzyme, which catalyzes the hydrolysis of ATP coupled with the exchange of sodium and potassium ions across the plasma membrane. This action creates the electrochemical gradient of sodium and potassium ions, providing the energy for active transport of various nutrients. Could also be part of an osmosensory signaling pathway that senses body-fluid sodium levels and controls salt intake behavior as well as voluntary water intake to regulate sodium homeostasis. This is Sodium/potassium-transporting ATPase subunit alpha-1 (ATP1A1) from Homo sapiens (Human).